Reading from the N-terminus, the 284-residue chain is Bifunctional protein FolD (284 aa).

NADP(+) contacts are provided by residues Gly166–Ser168 and Ile232.

It belongs to the tetrahydrofolate dehydrogenase/cyclohydrolase family. Homodimer.

The catalysed reaction is (6R)-5,10-methylene-5,6,7,8-tetrahydrofolate + NADP(+) = (6R)-5,10-methenyltetrahydrofolate + NADPH. It carries out the reaction (6R)-5,10-methenyltetrahydrofolate + H2O = (6R)-10-formyltetrahydrofolate + H(+). It participates in one-carbon metabolism; tetrahydrofolate interconversion. In terms of biological role, catalyzes the oxidation of 5,10-methylenetetrahydrofolate to 5,10-methenyltetrahydrofolate and then the hydrolysis of 5,10-methenyltetrahydrofolate to 10-formyltetrahydrofolate. The polypeptide is Bifunctional protein FolD (Alteromonas mediterranea (strain DSM 17117 / CIP 110805 / LMG 28347 / Deep ecotype)).